Consider the following 207-residue polypeptide: Large ribosomal subunit protein uL4 (207 aa).

A compositionally biased stretch (basic and acidic residues) spans 44–58; the sequence is RAPTRATRERSDVAR. Positions 44–82 are disordered; the sequence is RAPTRATRERSDVARSGKKFGRQKGGGTARHGDRRSPIF.

It belongs to the universal ribosomal protein uL4 family. In terms of assembly, part of the 50S ribosomal subunit.

Its function is as follows. One of the primary rRNA binding proteins, this protein initially binds near the 5'-end of the 23S rRNA. It is important during the early stages of 50S assembly. It makes multiple contacts with different domains of the 23S rRNA in the assembled 50S subunit and ribosome. Functionally, forms part of the polypeptide exit tunnel. The chain is Large ribosomal subunit protein uL4 from Zymomonas mobilis subsp. mobilis (strain ATCC 31821 / ZM4 / CP4).